We begin with the raw amino-acid sequence, 294 residues long: Deubiquitinase OTUD6B (294 aa).

Residues Val-85–Asp-120 form a disordered region. Positions Lys-111 to Asp-120 are enriched in basic and acidic residues. Positions Leu-150–Leu-287 constitute an OTU domain. Residues Ile-155–Cys-161 are cys-loop. Asp-158 is a catalytic residue. Cys-161 functions as the Nucleophile in the catalytic mechanism. The interval Ile-222 to Leu-232 is variable-loop. The tract at residues Tyr-270–His-280 is his-loop. His-280 is a catalytic residue.

It catalyses the reaction Thiol-dependent hydrolysis of ester, thioester, amide, peptide and isopeptide bonds formed by the C-terminal Gly of ubiquitin (a 76-residue protein attached to proteins as an intracellular targeting signal).. Deubiquitinating enzyme that may play a role in the ubiquitin-dependent regulation of different cellular processes. The sequence is that of Deubiquitinase OTUD6B (otud6b) from Xenopus laevis (African clawed frog).